The chain runs to 515 residues: Bifunctional purine biosynthesis protein PurH (515 aa).

In terms of domain architecture, MGS-like spans 1–145 (MTKRVLISVS…KNHASVTVVV (145 aa)).

Belongs to the PurH family.

It catalyses the reaction (6R)-10-formyltetrahydrofolate + 5-amino-1-(5-phospho-beta-D-ribosyl)imidazole-4-carboxamide = 5-formamido-1-(5-phospho-D-ribosyl)imidazole-4-carboxamide + (6S)-5,6,7,8-tetrahydrofolate. The enzyme catalyses IMP + H2O = 5-formamido-1-(5-phospho-D-ribosyl)imidazole-4-carboxamide. Its pathway is purine metabolism; IMP biosynthesis via de novo pathway; 5-formamido-1-(5-phospho-D-ribosyl)imidazole-4-carboxamide from 5-amino-1-(5-phospho-D-ribosyl)imidazole-4-carboxamide (10-formyl THF route): step 1/1. It participates in purine metabolism; IMP biosynthesis via de novo pathway; IMP from 5-formamido-1-(5-phospho-D-ribosyl)imidazole-4-carboxamide: step 1/1. This chain is Bifunctional purine biosynthesis protein PurH, found in Streptococcus pneumoniae (strain P1031).